The primary structure comprises 249 residues: Proteasome activator complex subunit 1 (249 aa).

A disordered region spans residues 60-101 (PLDIPVPDPVKEKEKGERKKQQEKEDKDEKKKGEDEDKGPPC). Over residues 68–98 (PVKEKEKGERKKQQEKEDKDEKKKGEDEDKG) the composition is skewed to basic and acidic residues.

This sequence belongs to the PA28 family. In terms of assembly, heterodimer of PSME1 and PSME2, which forms a hexameric ring. PSME1 can form homoheptamers.

In terms of biological role, implicated in immunoproteasome assembly and required for efficient antigen processing. The PA28 activator complex enhances the generation of class I binding peptides by altering the cleavage pattern of the proteasome. The protein is Proteasome activator complex subunit 1 (PSME1) of Macaca fascicularis (Crab-eating macaque).